Reading from the N-terminus, the 105-residue chain is Heat shock protein HspQ (105 aa).

Belongs to the HspQ family.

Its subcellular location is the cytoplasm. Functionally, involved in the degradation of certain denaturated proteins, including DnaA, during heat shock stress. In Yersinia enterocolitica serotype O:8 / biotype 1B (strain NCTC 13174 / 8081), this protein is Heat shock protein HspQ.